Reading from the N-terminus, the 187-residue chain is Bis(5'-nucleosyl)-tetraphosphatase, symmetrical (187 aa).

Positions R18–N132 constitute an HD domain. Residue H21 coordinates ADP. Fe cation contacts are provided by H21, H50, and D51. Residues D51 to K54, H83, H109 to T110, D127, R133, and P170 to T175 contribute to the ADP site. Residue D127 coordinates Fe cation.

The protein belongs to the Ap4A hydrolase YqeK family. As to quaternary structure, homodimer.

It carries out the reaction P(1),P(4)-bis(5'-adenosyl) tetraphosphate + H2O = 2 ADP + 2 H(+). Hydrolyzes diadenosine 5',5'''-P1,P4-tetraphosphate (Ap4A) to yield ADP. This Halalkalibacterium halodurans (strain ATCC BAA-125 / DSM 18197 / FERM 7344 / JCM 9153 / C-125) (Bacillus halodurans) protein is Bis(5'-nucleosyl)-tetraphosphatase, symmetrical.